The sequence spans 479 residues: Poly(A) polymerase catalytic subunit (479 aa).

Residues aspartate 202 and aspartate 204 contribute to the active site. The Ca(2+) site is built by aspartate 202, aspartate 204, and aspartate 253.

This sequence belongs to the poxviridae poly(A) polymerase catalytic subunit family. In terms of assembly, heterodimer of a large (catalytic) subunit and a small (regulatory) subunit.

The catalysed reaction is RNA(n) + ATP = RNA(n)-3'-adenine ribonucleotide + diphosphate. Functionally, polymerase that creates the 3'-poly(A) tail of mRNA's. The chain is Poly(A) polymerase catalytic subunit (OPG063) from Mus musculus (Mouse).